The following is a 773-amino-acid chain: MILDTDYITEDGKPVIRIFKKENGEFKIDYDRNFEPYIYALLKDDSAIEDVKKITAERHGTTVRVVRAEKVKKKFLGRPIEVWKLYFTHPQDVPAIRDKIKEHPAVVDIYEYDIPFAKRYLIDKGLIPMEGDEELKMLAFDIETLYHEGEEFAEGPILMISYADEEGARVITWKNIDLPYVDVVSTEKEMIKRFLKVVKEKDPDVLITYNGDNFDFAYLKKRSEKLGVKFILGREGSEPKIQRMGDRFAVEVKGRIHFDLYPVIRRTINLPTYTLEAVYEAIFGQPKEKVYAEEIAQAWETGEGLERVARYSMEDAKVTYELGKEFFPMEAQLSRLVGQSLWDVSRSSTGNLVEWFLLRKAYERNELAPNKPDERELARRRESYAGGYVKEPERGLWENIVYLDFRSLYPSIIITHNVSPDTLNREGCEEYDVAPQVGHKFCKDFPGFIPSLLGDLLEERQKVKKKMKATIDPIEKKLLDYRQRAIKILANSFYGYYGYAKARWYCKECAESVTAWGRQYIETTIREIEEKFGFKVLYADTDGFFATIPGADAETVKKKAKEFLDYINAKLPGLLELEYEGFYKRGFFVTKKKYAVIDEEDKITTRGLEIVRRDWSEIAKETQARVLEAILKHGDVEEAVRIVKEVTEKLSKYEVPPEKLVIYEQITRDLKDYKATGPHVAVAKRLAARGIKIRPGTVISYIVLKGSGRIGDRAIPFDEFDPAKHKYDAEYYIENQVLPAVERILRAFGYRKEDLRYQKTRQVGLGAWLKPKT.

2 disulfides stabilise this stretch: Cys428–Cys442 and Cys506–Cys509.

This sequence belongs to the DNA polymerase type-B family.

It carries out the reaction DNA(n) + a 2'-deoxyribonucleoside 5'-triphosphate = DNA(n+1) + diphosphate. In addition to polymerase activity, this DNA polymerase exhibits 3' to 5' exonuclease activity. In Thermococcus gorgonarius, this protein is DNA polymerase (pol).